A 650-amino-acid chain; its full sequence is ATP-binding cassette sub-family G member 3 (650 aa).

Residues 1–387 lie on the Cytoplasmic side of the membrane; sequence MASNNDPTVI…KNFKGFPWVT (387 aa). The ABC transporter domain maps to 37–279; it reads LSFHNISYQE…FRSAGYNYES (243 aa). One can recognise an ABC transmembrane type-2 domain in the interval 381–644; sequence KGFPWVTVIQ…TITYVQLLQV (264 aa). The chain crosses the membrane as a helical span at residues 388–408; that stretch reads VIQAIITVILATAVGTAFRVL. Residues 409-420 are Extracellular-facing; the sequence is KNDCIEVQMRAG. The chain crosses the membrane as a helical span at residues 421 to 441; that stretch reads LLYLLTIFQCITSVSAGELFV. Over 442–469 the chain is Cytoplasmic; it reads IDRVRFLHEHTSGYYRVSSYFFGKLLAE. Residues 470–490 traverse the membrane as a helical segment; sequence LIPRRLLPSTVFSLITYVIAG. Residues 491–498 lie on the Extracellular side of the membrane; sequence VKMSMKCF. A helical membrane pass occupies residues 499–519; the sequence is FTMICTIMVLAYSASSLPLSI. The Cytoplasmic portion of the chain corresponds to 520-527; sequence GAGENAVA. A helical membrane pass occupies residues 528–548; the sequence is VPTLLVTIYFVFMLFFSGLSL. Over 549–623 the chain is Extracellular; sequence YSGSFLPKLS…LSSWGFWENH (75 aa). Residues 624–644 traverse the membrane as a helical segment; that stretch reads LALVCTMIILLTITYVQLLQV. Residues 645–648 are Cytoplasmic-facing; the sequence is KNIR.

This sequence belongs to the ABC transporter superfamily. ABCG family. Eye pigment precursor importer (TC 3.A.1.204) subfamily. In terms of assembly, may dimerize with another subunit to form a functional transporter. As to expression, highest levels of expression in thymus and spleen. Detected in lung and small intestine.

Its subcellular location is the membrane. The sequence is that of ATP-binding cassette sub-family G member 3 (Abcg3) from Mus musculus (Mouse).